Reading from the N-terminus, the 1648-residue chain is Histone transcription regulator 3 (1648 aa).

2 disordered regions span residues 301–371 (NTPS…EQEN) and 1597–1630 (DVND…IKKR). Thr-302 bears the Phosphothreonine mark. Ser-304 is modified (phosphoserine). Residues 339-353 (EEARPNKRTDEHIDS) show a composition bias toward basic and acidic residues. The span at 1597-1610 (DVNDENNPALPSSG) shows a compositional bias: polar residues. A compositionally biased stretch (low complexity) spans 1611–1625 (SVTSKSTPDPTSKPS).

Belongs to the HIR3 family. As to quaternary structure, component of the HIR complex, composed of HIR1, HIR2, HIR3 and HPC2. This complex may consist of one copy of HIR1 and HIR3 and two copies of HIR2 and HPC2. The HIR complex interacts with ASF1. Interacts with RTT106.

It is found in the nucleus. The protein resides in the chromosome. In terms of biological role, HIR1, HIR2 and HIR3 are repressors of histone gene transcription. They are required for the periodic repression of three of the four histone gene loci during cell cycle as well as for autogenous regulation of the HTA1-HTB1 locus by H2A and H2B. Also has a role in nucleosome assembly. This is Histone transcription regulator 3 (HIR3) from Saccharomyces cerevisiae (strain ATCC 204508 / S288c) (Baker's yeast).